Reading from the N-terminus, the 1241-residue chain is RNA polymerase II C-terminal domain phosphatase-like 3 (1241 aa).

Disordered regions lie at residues 361–402, 428–470, 505–525, 578–598, 677–702, 720–800, and 852–885; these read DHDA…TTEG, VFKT…HLIY, ISAP…RDPR, KRQK…WLED, AIQK…VSTP, VLQD…QNGT, and TERD…GPTR. The segment covering 368–378 has biased composition (polar residues); that stretch reads PSPTRETTPSL. Low complexity predominate over residues 441–466; it reads GEPNDGNGDVGGEVSSSVVKSSNPGS. The segment covering 677–686 has biased composition (basic and acidic residues); it reads AIQKPMDPRR. 2 stretches are compositionally biased toward polar residues: residues 691–702 and 791–800; these read PGSSVQPGVSTP and PRQNISQNGT. Residues 871-881 are compositionally biased toward low complexity; the sequence is SVSAASVTAAA. The region spanning 923 to 1103 is the FCP1 homology domain; it reads FASQKLSLVL…GLLGPSLLEL (181 aa). Residues 1146–1239 enclose the BRCT domain; the sequence is EQRKILAGCR…QRANENLYAI (94 aa).

Interacts with RAP74. It depends on Mg(2+) as a cofactor. Co(2+) serves as cofactor. Mn(2+) is required as a cofactor.

Its subcellular location is the nucleus. The enzyme catalyses O-phospho-L-seryl-[protein] + H2O = L-seryl-[protein] + phosphate. It catalyses the reaction O-phospho-L-threonyl-[protein] + H2O = L-threonyl-[protein] + phosphate. In terms of biological role, completely dephosphorylates 'Ser-2', and partially 'Ser-5' and 'Ser-7' of the heptad repeats YSPTSPS in the C-terminal domain (CTD) of the largest RNA polymerase II subunit (RPB1). Involved in defense response. Acts as a negative regulator of immune gene expression and immunity to pathogen infections. Preferentially dephosphorylates 'Ser-2' of RNA polymerase II CTD. This counterregulates the MAP kinase (MAPK) or cyclin-dependent kinase C (CDKC)-mediated phosphorylation of CTD in response to pathogens and upon perception of microbe-associated molecular patterns (MAMPs). MAPKs phosphorylate and activate CDKCs, which are CTD kinases that positively regulate plant innate immunity. Acts as a negative regulator of stress gene transcription involved in abscisic acid (ABA) mediated signaling pathway and cold resistance. Acts as a post-transcriptional gene silencing (PTGS) suppressor. This chain is RNA polymerase II C-terminal domain phosphatase-like 3, found in Arabidopsis thaliana (Mouse-ear cress).